We begin with the raw amino-acid sequence, 383 residues long: Paralemmin-1 (383 aa).

N-acetylmethionine is present on Met-1. Residues 7 to 101 adopt a coiled-coil conformation; the sequence is DTVSQQERLQ…EKEIDVLEFG (95 aa). 3 disordered regions span residues 51 to 164, 242 to 293, and 333 to 374; these read RERW…STMM, TLSE…QPGQ, and SVTP…DMKK. Residues 69-96 show a composition bias toward basic and acidic residues; sequence DMRKQMQEDEQKARSLEESITRLEKEID. Phosphoserine is present on residues Ser-116, Ser-122, and Ser-124. Positions 133–143 are enriched in polar residues; sequence ETMVNAQQTPL. A phosphothreonine mark is found at Thr-141, Thr-145, and Thr-153. Residues Ser-157 and Ser-161 each carry the phosphoserine modification. Phosphothreonine is present on Thr-242. Ser-244 carries the post-translational modification Phosphoserine. Positions 257–273 are enriched in basic and acidic residues; that stretch reads GLAEDVTRTTPSRREIT. A Phosphoserine modification is found at Ser-345. Residues 357–367 show a composition bias toward polar residues; that stretch reads QTGPTTTPSDT. A phosphothreonine mark is found at Thr-361, Thr-362, and Thr-363. Residue Ser-365 is modified to Phosphoserine. A Phosphothreonine modification is found at Thr-367. S-palmitoyl cysteine attachment occurs at residues Cys-377 and Cys-379. Cysteine methyl ester is present on Cys-380. Cys-380 carries S-farnesyl cysteine lipidation. The propeptide at 381-383 is removed in mature form; sequence SVM.

This sequence belongs to the paralemmin family. Interacts with dopamine receptor DRD3. Expressed in neurons cells of neuropil-rich areas of the brain, in the Purkinje cells of the cerebellum, in cells of the cerebral cortex, hippocampus, brainstem nuclei and glial processes and sheaths. Expressed in the medulla of the adrenal chromaffin cells and renal duct cells (at protein level).

The protein localises to the cell membrane. It localises to the cell projection. The protein resides in the filopodium membrane. It is found in the axon. Its subcellular location is the dendrite. The protein localises to the dendritic spine. It localises to the basolateral cell membrane. The protein resides in the apicolateral cell membrane. In terms of biological role, involved in plasma membrane dynamics and cell process formation. Necessary for axonal and dendritic filopodia induction, for dendritic spine maturation and synapse formation in a palmitoylation-dependent manner. The protein is Paralemmin-1 (Palm) of Rattus norvegicus (Rat).